Reading from the N-terminus, the 111-residue chain is uncharacterized protein (111 aa).

Residues 12-34 (AWCPSRPPASAPSAPQEAARRGD) form a disordered region. Positions 71-76 (PNIIIT) are required for interaction with PPP3CA. A phosphothreonine mark is found at threonine 79 and threonine 81.

As to quaternary structure, interacts (via PxIxIT motif, when phosphorylated on Thr-79) with PPP3CA.

This is an uncharacterized protein from Mus musculus (Mouse).